The chain runs to 506 residues: Galactose/methyl galactoside import ATP-binding protein MglA (506 aa).

2 ABC transporter domains span residues 14–249 and 264–506; these read LEMS…VGRS and VILE…SLHL. 46–53 lines the ATP pocket; that stretch reads GENGAGKS.

This sequence belongs to the ABC transporter superfamily. Galactose/methyl galactoside importer (TC 3.A.1.2.3) family. The complex is composed of one ATP-binding protein (MglA), two transmembrane proteins (MglC) and a solute-binding protein (MglB).

The protein localises to the cell inner membrane. It carries out the reaction D-galactose(out) + ATP + H2O = D-galactose(in) + ADP + phosphate + H(+). It catalyses the reaction methyl beta-D-galactoside(out) + ATP + H2O = methyl beta-D-galactoside(in) + ADP + phosphate + H(+). Part of the ABC transporter complex MglABC involved in galactose/methyl galactoside import. Responsible for energy coupling to the transport system. The chain is Galactose/methyl galactoside import ATP-binding protein MglA from Escherichia coli (strain K12).